We begin with the raw amino-acid sequence, 279 residues long: Putative pyruvate, phosphate dikinase regulatory protein (279 aa).

An ADP-binding site is contributed by G157–T164.

The protein belongs to the pyruvate, phosphate/water dikinase regulatory protein family. PDRP subfamily.

It carries out the reaction N(tele)-phospho-L-histidyl/L-threonyl-[pyruvate, phosphate dikinase] + ADP = N(tele)-phospho-L-histidyl/O-phospho-L-threonyl-[pyruvate, phosphate dikinase] + AMP + H(+). It catalyses the reaction N(tele)-phospho-L-histidyl/O-phospho-L-threonyl-[pyruvate, phosphate dikinase] + phosphate + H(+) = N(tele)-phospho-L-histidyl/L-threonyl-[pyruvate, phosphate dikinase] + diphosphate. Its function is as follows. Bifunctional serine/threonine kinase and phosphorylase involved in the regulation of the pyruvate, phosphate dikinase (PPDK) by catalyzing its phosphorylation/dephosphorylation. The sequence is that of Putative pyruvate, phosphate dikinase regulatory protein from Lactobacillus helveticus (strain DPC 4571).